We begin with the raw amino-acid sequence, 351 residues long: dTDP-glucose 4,6-dehydratase (351 aa).

NAD(+) contacts are provided by residues 12-13, 32-35, 58-59, 80-84, and Thr-99; these read FI, DALT, DI, and FAAES. Residue Ser-84 coordinates substrate. Thr-133 is a substrate binding site. The active-site Proton donor is Asp-134. Residues Glu-135 and Tyr-158 each act as proton acceptor in the active site. An NAD(+)-binding site is contributed by 158–162; it reads YSASK. Asn-187 is a substrate binding site. Position 188 (Asn-188) interacts with NAD(+). Residues 197-198, 213-215, Arg-222, Asn-257, and 289-293 contribute to the substrate site; these read KL, PVY, and DRPGH.

It belongs to the NAD(P)-dependent epimerase/dehydratase family. dTDP-glucose dehydratase subfamily. As to quaternary structure, homodimer. Requires NAD(+) as cofactor.

It carries out the reaction dTDP-alpha-D-glucose = dTDP-4-dehydro-6-deoxy-alpha-D-glucose + H2O. Its pathway is carbohydrate biosynthesis; dTDP-L-rhamnose biosynthesis. It functions in the pathway bacterial outer membrane biogenesis; LPS O-antigen biosynthesis. Catalyzes the dehydration of dTDP-D-glucose to form dTDP-6-deoxy-D-xylo-4-hexulose via a three-step process involving oxidation, dehydration and reduction. The polypeptide is dTDP-glucose 4,6-dehydratase (rfbB) (Xanthomonas campestris pv. campestris (strain B100)).